The following is a 546-amino-acid chain: Phosphatidylinositol 4-phosphate 5-kinase type-1 alpha (546 aa).

The PIPK domain maps to 65–433 (TSSALKGAIQ…RFQRFMCNTV (369 aa)). Lys-87 is covalently cross-linked (Glycyl lysine isopeptide (Lys-Gly) (interchain with G-Cter in ubiquitin)). Residues 441–522 (PSPTKKFRSG…PGPSFSPAVG (82 aa)) form a disordered region. Residues 449 to 461 (SGPSFSRRSGPSG) are compositionally biased toward low complexity. The segment covering 462–471 (NSCTPSQPTA) has biased composition (polar residues). Residues 473–493 (GEHKAQVTTKAEVEPDIHLGR) show a composition bias toward basic and acidic residues.

In terms of assembly, interacts with RAC1. Interacts with TUT1. Forms a complex with CDH1/E-cadherin, CTNNB1/beta-catenin and CTNND1 at the plasma membrane upon calcium stimulation. Found in a ternary complex with IRS1 and DGKZ in the absence of insulin stimulation. Interacts with DGKZ. Interacts with PIP4K2C; the interaction inhibits PIP5K1A kinase activity.

Its subcellular location is the cell membrane. It localises to the cytoplasm. The protein localises to the nucleus. The protein resides in the nucleus speckle. It is found in the cell projection. Its subcellular location is the ruffle. It localises to the lamellipodium. It catalyses the reaction a 1,2-diacyl-sn-glycero-3-phospho-(1D-myo-inositol 4-phosphate) + ATP = a 1,2-diacyl-sn-glycero-3-phospho-(1D-myo-inositol-4,5-bisphosphate) + ADP + H(+). The catalysed reaction is 1-octadecanoyl-2-(5Z,8Z,11Z,14Z)-eicosatetraenoyl-sn-glycero-3-phospho-1D-myo-inositol 4-phosphate + ATP = 1-octadecanoyl-2-(5Z,8Z,11Z,14Z)-eicosatetraenoyl-sn-glycero-3-phospho-1D-myo-inositol 4,5-bisphosphate + ADP + H(+). It carries out the reaction 1,2-dihexadecanoyl-sn-glycero-3-phospho-(1D-myo-inositol-4-phosphate) + ATP = 1,2-dihexadecanoyl-sn-glycero-3-phospho-(1D-myo-inositol-4,5-bisphosphate) + ADP + H(+). The enzyme catalyses 1-octadecanoyl-2-(9Z)-octadecenoyl-sn-glycero-3-phospho-1D-myo-inositol 4-phosphate + ATP = 1-octadecanoyl-2-(9Z)-octadecenoyl-sn-glycero-3-phospho-1D-myo-inositol 4,5-bisphosphate + ADP + H(+). It catalyses the reaction 1-octadecanoyl-2-(9Z)-octadecenoyl-sn-glycero-3-phospho-1D-myo-inositol + ATP = 1-octadecanoyl-2-(9Z)-octadecenoyl-sn-glycero-3-phospho-1D-myo-inositol 5-phosphate + ADP + H(+). The catalysed reaction is 1-octadecanoyl-2-(9Z,12Z)-octadecadienoyl-sn-glycero-3-phospho-1D-myo-inositol + ATP = 1-octadecanoyl-2-(9Z,12Z)-octadecadienoyl-sn-glycero-3-phospho-1D-myo-inositol 5-phosphate + ADP + H(+). It carries out the reaction 1-octadecanoyl-2-(5Z,8Z,11Z,14Z-eicosatetraenoyl)-sn-glycero-3-phospho-(1D-myo-inositol) + ATP = 1-octadecanoyl-2-(5Z,8Z,11Z,14Z)-eicosatetraenoyl-sn-glycero-3-phospho-1D-myo-inositol 5-phosphate + ADP + H(+). The enzyme catalyses 1,2-di-(9Z,12Z)-octadecadienoyl-sn-glycero-3-phospho-1D-myo-inositol + ATP = 1,2-di(9Z,12Z)-octadecadienoyl-sn-glycero-3-phospho-1D-myo-inositol 5-phosphate + ADP + H(+). Its function is as follows. Catalyzes the phosphorylation of phosphatidylinositol 4-phosphate (PtdIns(4)P/PI4P) to form phosphatidylinositol 4,5-bisphosphate (PtdIns(4,5)P2/PIP2), a lipid second messenger that regulates several cellular processes such as signal transduction, vesicle trafficking, actin cytoskeleton dynamics, cell adhesion, and cell motility. PtdIns(4,5)P2 can directly act as a second messenger or can be utilized as a precursor to generate other second messengers: inositol 1,4,5-trisphosphate (IP3), diacylglycerol (DAG) or phosphatidylinositol-3,4,5-trisphosphate (PtdIns(3,4,5)P3/PIP3). PIP5K1A-mediated phosphorylation of PtdIns(4)P is the predominant pathway for PtdIns(4,5)P2 synthesis. Can also use phosphatidylinositol (PtdIns) as substrate in vitro. Together with PIP5K1C, is required for phagocytosis, both enzymes regulating different types of actin remodeling at sequential steps. Promotes particle ingestion by activating the WAS GTPase-binding protein that induces Arp2/3 dependent actin polymerization at the nascent phagocytic cup. Together with PIP5K1B, is required, after stimulation by G-protein coupled receptors, for the synthesis of IP3 that will induce stable platelet adhesion. Recruited to the plasma membrane by the E-cadherin/beta-catenin complex where it provides the substrate PtdIns(4,5)P2 for the production of PtdIns(3,4,5)P3, IP3 and DAG, that will mobilize internal calcium and drive keratinocyte differentiation. Positively regulates insulin-induced translocation of SLC2A4 to the cell membrane in adipocytes. Together with PIP5K1C has a role during embryogenesis. Independently of its catalytic activity, is required for membrane ruffling formation, actin organization and focal adhesion formation during directional cell migration by controlling integrin-induced translocation of the small GTPase RAC1 to the plasma membrane. Also functions in the nucleus where it acts as an activator of TUT1 adenylyltransferase activity in nuclear speckles, thereby regulating mRNA polyadenylation of a select set of mRNAs. This Rattus norvegicus (Rat) protein is Phosphatidylinositol 4-phosphate 5-kinase type-1 alpha.